The following is a 1939-amino-acid chain: Myosin-1 (1939 aa).

The 50-residue stretch at Asp33–Pro82 folds into the Myosin N-terminal SH3-like domain. Phosphothreonine is present on residues Thr64 and Thr69. One can recognise a Myosin motor domain in the interval Asp86–Asp782. Residue Lys130 is modified to N6,N6,N6-trimethyllysine. Residue Gly179 to Thr186 participates in ATP binding. Tyr389 carries the post-translational modification Phosphotyrosine. Ser392 is subject to Phosphoserine. A Phosphothreonine modification is found at Thr419. Position 424 is a phosphotyrosine (Tyr424). Ser625 bears the Phosphoserine mark. The tract at residues Leu659–Glu681 is actin-binding. A Pros-methylhistidine modification is found at His757. The tract at residues Lys761–Gly775 is actin-binding. One can recognise an IQ domain in the interval Leu785–Ser814. A coiled-coil region spans residues Leu843–Glu1939. Residues Ser1092 and Ser1096 each carry the phosphoserine modification. Disordered stretches follow at residues Glu1125–Leu1147 and Arg1153–Glu1172. A compositionally biased stretch (basic and acidic residues) spans Ala1128 to Leu1147. 2 positions are modified to phosphoserine: Ser1162 and Ser1237. A Phosphothreonine modification is found at Thr1241. Position 1243 is a phosphoserine (Ser1243). Phosphothreonine is present on Thr1255. Ser1261 carries the post-translational modification Phosphoserine. Phosphothreonine occurs at positions 1265 and 1286. Ser1288, Ser1292, Ser1303, and Ser1306 each carry phosphoserine. Tyr1464 carries the post-translational modification Phosphotyrosine. At Thr1467 the chain carries Phosphothreonine. Ser1474 carries the phosphoserine modification. At Tyr1492 the chain carries Phosphotyrosine. Phosphoserine is present on Ser1495. Phosphothreonine is present on Thr1501. The residue at position 1514 (Ser1514) is a Phosphoserine. A Phosphothreonine modification is found at Thr1517. A phosphoserine mark is found at Ser1554, Ser1574, Ser1600, Ser1603, Ser1714, and Ser1726. 2 positions are modified to phosphothreonine: Thr1730 and Thr1736. The residue at position 1739 (Ser1739) is a Phosphoserine.

Belongs to the TRAFAC class myosin-kinesin ATPase superfamily. Myosin family. As to quaternary structure, muscle myosin is a hexameric protein that consists of 2 heavy chain subunits (MHC), 2 alkali light chain subunits (MLC) and 2 regulatory light chain subunits (MLC-2). Interacts with SLC26A5.

Its subcellular location is the cytoplasm. It localises to the myofibril. In terms of biological role, required for normal hearing. It plays a role in cochlear amplification of auditory stimuli, likely through the positive regulation of prestin (SLC26A5) activity and outer hair cell (OHC) electromotility. This is Myosin-1 (MYH1) from Canis lupus familiaris (Dog).